The following is a 311-amino-acid chain: Retinol dehydrogenase 8 (311 aa).

L9 to G18 contacts NADP(+). 3 helical membrane-spanning segments follow: residues V86–A106, I137–A157, and L169–V189. S142 contributes to the substrate binding site. Residue Y155 is the Proton acceptor of the active site.

It belongs to the short-chain dehydrogenases/reductases (SDR) family. Detected in photoreceptor outer segments in the retina (at protein level).

It localises to the membrane. The catalysed reaction is all-trans-retinol + NADP(+) = all-trans-retinal + NADPH + H(+). Retinol dehydrogenase with a clear preference for NADP. Converts all-trans-retinal to all-trans-retinol. May play a role in the regeneration of visual pigment at high light intensity. In Homo sapiens (Human), this protein is Retinol dehydrogenase 8 (RDH8).